A 120-amino-acid chain; its full sequence is NAD(P)H-quinone oxidoreductase subunit 3, chloroplastic (120 aa).

3 helical membrane passes run 9 to 29, 64 to 84, and 88 to 108; these read IFWA…LISG, MFAL…PWAM, and VLGV…IVGS.

The protein belongs to the complex I subunit 3 family. In terms of assembly, NDH is composed of at least 16 different subunits, 5 of which are encoded in the nucleus.

Its subcellular location is the plastid. It localises to the chloroplast thylakoid membrane. It catalyses the reaction a plastoquinone + NADH + (n+1) H(+)(in) = a plastoquinol + NAD(+) + n H(+)(out). The catalysed reaction is a plastoquinone + NADPH + (n+1) H(+)(in) = a plastoquinol + NADP(+) + n H(+)(out). In terms of biological role, NDH shuttles electrons from NAD(P)H:plastoquinone, via FMN and iron-sulfur (Fe-S) centers, to quinones in the photosynthetic chain and possibly in a chloroplast respiratory chain. The immediate electron acceptor for the enzyme in this species is believed to be plastoquinone. Couples the redox reaction to proton translocation, and thus conserves the redox energy in a proton gradient. The polypeptide is NAD(P)H-quinone oxidoreductase subunit 3, chloroplastic (Gossypium hirsutum (Upland cotton)).